The following is a 69-amino-acid chain: NAD(P)H-quinone oxidoreductase subunit L (69 aa).

A run of 2 helical transmembrane segments spans residues 5–25 (LILLLGLLGGYLLVMPAITYF) and 40–60 (GFMYFLVFFFFPSLLLLSPFL).

This sequence belongs to the complex I NdhL subunit family. As to quaternary structure, NDH-1 can be composed of about 15 different subunits; different subcomplexes with different compositions have been identified which probably have different functions.

It localises to the cellular thylakoid membrane. It carries out the reaction a plastoquinone + NADH + (n+1) H(+)(in) = a plastoquinol + NAD(+) + n H(+)(out). It catalyses the reaction a plastoquinone + NADPH + (n+1) H(+)(in) = a plastoquinol + NADP(+) + n H(+)(out). Its function is as follows. NDH-1 shuttles electrons from an unknown electron donor, via FMN and iron-sulfur (Fe-S) centers, to quinones in the respiratory and/or the photosynthetic chain. The immediate electron acceptor for the enzyme in this species is believed to be plastoquinone. Couples the redox reaction to proton translocation, and thus conserves the redox energy in a proton gradient. Cyanobacterial NDH-1 also plays a role in inorganic carbon-concentration. The protein is NAD(P)H-quinone oxidoreductase subunit L of Acaryochloris marina (strain MBIC 11017).